A 661-amino-acid chain; its full sequence is 7-beta-hydroxy-3-oxochol-24-oyl-CoA 4-desaturase (661 aa).

Gln104 is a binding site for FMN. His168–His171 is a binding site for substrate. Catalysis depends on Tyr173, which acts as the Proton donor. FMN-binding positions include Arg222, Lys298, and Gly320–Arg321. Residues Cys344, Cys347, Cys351, and Cys363 each contribute to the [4Fe-4S] cluster site. Gly394, Glu413, Gln421, Lys431, and Ala458 together coordinate FAD.

The protein in the N-terminal section; belongs to the NADH:flavin oxidoreductase/NADH oxidase family. Homotrimer. Requires FMN as cofactor. FAD serves as cofactor. The cofactor is [4Fe-4S] cluster.

The enzyme catalyses 7beta-hydroxy-3-oxochol-24-oyl-CoA + NAD(+) = 7beta-hydroxy-3-oxochol-4-en-24-oyl-CoA + NADH + H(+). It participates in lipid metabolism; bile acid degradation. Activity is inhibited by sulfhydryl-reactive compounds, acriflavine, o-phenanthroline and EDTA. Its function is as follows. NADH-dependent flavin oxidoreductase. Stereo-specific NAD(H)-dependent 3-oxo-delta4-cholenoic acid oxidoreductase involved in bile acid 7beta-dehydroxylation. The polypeptide is 7-beta-hydroxy-3-oxochol-24-oyl-CoA 4-desaturase (Clostridium scindens (strain JCM 10418 / VPI 12708)).